The primary structure comprises 147 residues: Ubiquitin-conjugating enzyme E2 D2 (147 aa).

The region spanning 1 to 147 (MALKRIHKEL…AREWTQKYAM (147 aa)) is the UBC core domain. C85 functions as the Glycyl thioester intermediate in the catalytic mechanism.

The protein belongs to the ubiquitin-conjugating enzyme family. In terms of assembly, interacts with SCF (SKP1-CUL1-F-box protein) E3 ubiquitin ligase complex. Interacts with CNOT4 (via RING domain). Interacts with E3 ubiquitin-protein ligases CBLC, PJA1 and PJA2. Interacts with PDZRN3. Interacts with PPP1R11. Interacts with E3 ubiquitin-protein ligase PHF7; the interaction inhibits cleavage of PHF7 and promotes association of the complex with the nucleosome core particle.

The catalysed reaction is S-ubiquitinyl-[E1 ubiquitin-activating enzyme]-L-cysteine + [E2 ubiquitin-conjugating enzyme]-L-cysteine = [E1 ubiquitin-activating enzyme]-L-cysteine + S-ubiquitinyl-[E2 ubiquitin-conjugating enzyme]-L-cysteine.. The enzyme catalyses S-ubiquitinyl-[E1 ubiquitin-activating enzyme]-L-cysteine + [acceptor protein]-L-lysine = [E1 ubiquitin-activating enzyme]-L-cysteine + N(6)-monoubiquitinyl-[acceptor protein]-L-lysine.. Its pathway is protein modification; protein ubiquitination. In terms of biological role, accepts ubiquitin from the E1 complex and catalyzes its covalent attachment to other proteins. In vitro catalyzes 'Lys-48'-linked polyubiquitination. Mediates the selective degradation of short-lived and abnormal proteins. Functions in the E6/E6-AP-induced ubiquitination of p53/TP53. Mediates ubiquitination of PEX5 and SQSTM1 and autoubiquitination of STUB1 and TRAF6. Involved in the signal-induced conjugation and subsequent degradation of NFKBIA, FBXW2-mediated GCM1 ubiquitination and degradation, MDM2-dependent degradation of p53/TP53 and the activation of MAVS in the mitochondria by RIGI in response to viral infection. Essential for viral activation of IRF3. In Bos taurus (Bovine), this protein is Ubiquitin-conjugating enzyme E2 D2 (UBE2D2).